The primary structure comprises 530 residues: Inactive ubiquitin carboxyl-terminal hydrolase 17-like protein 4 (530 aa).

In terms of domain architecture, USP spans 80–375 (AGLQNMGNTC…QAYVLFYIQK (296 aa)). Over residues 382–392 (SESVSRGREPR) the composition is skewed to basic and acidic residues. Disordered regions lie at residues 382–410 (SESV…ELKR) and 493–530 (NSTD…LVCQ). Over residues 495–510 (TDQESMNTGTLASLQG) the composition is skewed to polar residues. A compositionally biased stretch (basic residues) spans 511–524 (RTRRSKGKNKHSKR).

This sequence belongs to the peptidase C19 family. USP17 subfamily.

Its subcellular location is the nucleus. It localises to the endoplasmic reticulum. This Homo sapiens (Human) protein is Inactive ubiquitin carboxyl-terminal hydrolase 17-like protein 4 (USP17L4).